The primary structure comprises 125 residues: Napin-3 (125 aa).

4 disulfide bridges follow: Cys10-Cys62, Cys23-Cys51, Cys52-Cys107, and Cys64-Cys115.

Belongs to the 2S seed storage albumins family. The mature protein consists of a small and a large chain linked by disulfide bonds.

The small, basic, water-soluble napins are one of the two major kinds of storage proteins synthesized in the seed during its maturation. The polypeptide is Napin-3 (Brassica napus (Rape)).